A 556-amino-acid chain; its full sequence is Glutamine--tRNA ligase (556 aa).

Residues 35–45 (PEPNGYLHIGH) carry the 'HIGH' region motif. Residues 36 to 38 (EPN) and 42 to 48 (HIGHAKS) contribute to the ATP site. The L-glutamine site is built by Asp-68 and Tyr-213. ATP-binding positions include Thr-232 and 262–263 (RL). The 'KMSKS' region motif lies at 269-273 (VTSKR).

This sequence belongs to the class-I aminoacyl-tRNA synthetase family. As to quaternary structure, monomer.

Its subcellular location is the cytoplasm. It catalyses the reaction tRNA(Gln) + L-glutamine + ATP = L-glutaminyl-tRNA(Gln) + AMP + diphosphate. The sequence is that of Glutamine--tRNA ligase from Pseudomonas aeruginosa (strain LESB58).